Here is a 106-residue protein sequence, read N- to C-terminus: Isocitrate dehydrogenase [NAD] subunit gamma, mitochondrial (106 aa).

Belongs to the isocitrate and isopropylmalate dehydrogenases family. In terms of assembly, heterooligomer of subunits alpha (IDH3A), beta (IDH3B), and gamma (IDH3G) in the apparent ratio of 2:1:1. The heterodimer containing one IDH3A and one IDH3B subunit and the heterodimer containing one IDH3A and one IDH3G subunit assemble into a heterotetramer (which contains two subunits of IDH3A, one of IDH3B and one of IDH3G) and further into the heterooctamer.

The protein resides in the mitochondrion. The heterotetramer and the heterodimer composed of IDH3A and IDH3G subunits can be allosterically activated by citrate (CIT) or/and ADP, and the two activators can act independently or synergistically. The heterodimer composed of IDH3A and IDH3B subunits cannot be allosterically regulated and the allosteric regulation of the heterotetramer is through the IDH3G subunit and not the IDH3B subunit. The IDH3G subunit contains the allosteric site which consists of a CIT-binding site and an ADP-binding site, and the binding of CIT and ADP causes conformational changes at the allosteric site which are transmitted to the active site in the catalytic subunit (IDH3A) through a cascade of conformational changes at the heterodimer interface, leading to stabilization of the isocitrate-binding at the active site and thus activation of the enzyme. ATP can activate the heterotetramer and the heterodimer composed of IDH3A and IDH3G subunits at low concentrations but inhibits their activities at high concentrations, whereas ATP exhibits only inhibitory effect on the heterodimer composed of IDH3A and IDH3B subunits. Functionally, regulatory subunit which plays a role in the allosteric regulation of the enzyme catalyzing the decarboxylation of isocitrate (ICT) into alpha-ketoglutarate. The heterodimer composed of the alpha (IDH3A) and beta (IDH3B) subunits and the heterodimer composed of the alpha (IDH3A) and gamma (IDH3G) subunits, have considerable basal activity but the full activity of the heterotetramer (containing two subunits of IDH3A, one of IDH3B and one of IDH3G) requires the assembly and cooperative function of both heterodimers. The chain is Isocitrate dehydrogenase [NAD] subunit gamma, mitochondrial (IDH3G) from Sus scrofa (Pig).